A 180-amino-acid chain; its full sequence is Trichosurin (180 aa).

The signal sequence occupies residues 1–15 (MKLLLLSMGLALVCG). N-linked (GlcNAc...) asparagine glycans are attached at residues Asn67 and Asn148. A disulfide bridge links Cys87 with Cys180.

It belongs to the calycin superfamily. Lipocalin family. As to quaternary structure, homodimer. Milk.

It localises to the secreted. The sequence is that of Trichosurin from Trichosurus vulpecula (Brush-tailed possum).